Here is a 227-residue protein sequence, read N- to C-terminus: Pectinesterase inhibitor 28 (227 aa).

Positions 1–25 (MASSMAPAAAMAILLLALLMPATLC) are cleaved as a signal peptide. The interval 28-50 (SGPPSSKHGHGGHAKRAPPPASP) is disordered. Over residues 34–43 (KHGHGGHAKR) the composition is skewed to basic residues. A disulfide bridge connects residues C66 and C75. N67, N104, and N117 each carry an N-linked (GlcNAc...) asparagine glycan. A disulfide bridge connects residues C139 and C179.

It belongs to the PMEI family. As to expression, expressed in roots, leaves, culms and flag leaves.

It localises to the secreted. The protein localises to the extracellular space. Its subcellular location is the apoplast. In terms of biological role, pectin methylesterase (PME) inhibitor that inhibits PME in vitro. Functions as a critical structural modulator by regulating the degree of pectin methylesterification and the physiochemical properties of the cell wall components. The protein is Pectinesterase inhibitor 28 of Oryza sativa subsp. japonica (Rice).